The sequence spans 716 residues: Phospholipid phosphatase-related protein type 3 (716 aa).

Transmembrane regions (helical) follow at residues 18-38 (LPCF…SLYF), 70-90 (LIPL…SIMV), and 131-151 (FVGV…VIQL). N-linked (GlcNAc...) asparagine glycosylation is present at N167. A run of 3 helical transmembrane segments spans residues 205–225 (HATL…SVIS), 231–251 (LKPI…LTQI), and 261–281 (VYAG…HAVG). A disordered region spans residues 311-334 (SMYQQNKSVSTDELGPPGRLEGVP). Over residues 312–321 (MYQQNKSVST) the composition is skewed to polar residues. A glycan (N-linked (GlcNAc...) asparagine) is linked at N316. 2 positions are modified to phosphoserine: S320 and S351. Phosphothreonine is present on T374. The tract at residues 416-488 (GRGLGLPDEA…RVILPPRPGP (73 aa)) is disordered. At S426 the chain carries Phosphoserine. Residues 437–460 (VAEEEEEEEEEEEEEEEEEEEEEG) are compositionally biased toward acidic residues. S506 bears the Phosphoserine mark. The tract at residues 548–589 (AMSKAAGGPKAETASSSSASSDSSQYRSPSDRDSASIVTIDA) is disordered. Over residues 562-575 (SSSSASSDSSQYRS) the composition is skewed to low complexity. Residue S641 is modified to Phosphoserine. Residues 664–694 (GEGLPPPGASEGALGAGSRESTLRRQVGALG) are disordered.

It belongs to the PA-phosphatase related phosphoesterase family.

The protein localises to the membrane. This is Phospholipid phosphatase-related protein type 3 from Rattus norvegicus (Rat).